Here is a 467-residue protein sequence, read N- to C-terminus: Light-independent protochlorophyllide reductase subunit N (467 aa).

[4Fe-4S] cluster contacts are provided by Cys-24, Cys-49, and Cys-109.

This sequence belongs to the BchN/ChlN family. As to quaternary structure, protochlorophyllide reductase is composed of three subunits; ChlL, ChlN and ChlB. Forms a heterotetramer of two ChlB and two ChlN subunits. [4Fe-4S] cluster serves as cofactor.

The catalysed reaction is chlorophyllide a + oxidized 2[4Fe-4S]-[ferredoxin] + 2 ADP + 2 phosphate = protochlorophyllide a + reduced 2[4Fe-4S]-[ferredoxin] + 2 ATP + 2 H2O. Its pathway is porphyrin-containing compound metabolism; chlorophyll biosynthesis (light-independent). Its function is as follows. Component of the dark-operative protochlorophyllide reductase (DPOR) that uses Mg-ATP and reduced ferredoxin to reduce ring D of protochlorophyllide (Pchlide) to form chlorophyllide a (Chlide). This reaction is light-independent. The NB-protein (ChlN-ChlB) is the catalytic component of the complex. This chain is Light-independent protochlorophyllide reductase subunit N, found in Leptolyngbya boryana (Plectonema boryanum).